Consider the following 509-residue polypeptide: DNA nucleotidylexotransferase (509 aa).

Residues 1–24 (MDPPRASHLSPRKKRPRQTGALMA) are disordered. The Nuclear localization signal signature appears at 11–17 (PRKKRPR). Residues 27–124 (PQDIKFQDLV…KPVEMTGKHQ (98 aa)) enclose the BRCT domain. Ser134 is modified (phosphoserine). The tract at residues 151-509 (SQYACQRRTT…DYIEPWERNA (359 aa)) is mediates interaction with DNTTIP2. The involved in DNA binding stretch occupies residues 258–262 (VGLKT). A 2'-deoxyribonucleoside 5'-triphosphate is bound by residues 333-338 (GFRRGK) and 342-345 (HDVD). Residues Asp343, Asp345, and Asp433 each contribute to the Mg(2+) site. 448–449 (GW) is a binding site for a 2'-deoxyribonucleoside 5'-triphosphate.

This sequence belongs to the DNA polymerase type-X family. As to quaternary structure, interacts with PRP19 and DNTTIP1. Forms a ternary complex with DNTTIP2 and core histone. Released from this complex by PCNA. Interacts with TRERF1. The cofactor is Mg(2+).

It localises to the nucleus. The enzyme catalyses DNA(n) + a 2'-deoxyribonucleoside 5'-triphosphate = DNA(n+1) + diphosphate. In terms of biological role, template-independent DNA polymerase which catalyzes the random addition of deoxynucleoside 5'-triphosphate to the 3'-end of a DNA initiator. One of the in vivo functions of this enzyme is the addition of nucleotides at the junction (N region) of rearranged Ig heavy chain and T-cell receptor gene segments during the maturation of B- and T-cells. The chain is DNA nucleotidylexotransferase (DNTT) from Homo sapiens (Human).